A 395-amino-acid chain; its full sequence is MHVRAPWSLPEPTLAYFPNARFVPSDRDLGAGALRLVGEDCPAPTRGGVAVADGPTEPGFNDFHHVPVLAQRCVELLRPALTRHHADGSEAVLVDATIGAGGHAERFLTELPGLRLIGLDRDPSALEIVRTRLARFTDRVTLVHTRYDGLASALTELGYGAAQSIDGALFDLGVSSMQLDQAERGFAYSKDAPLDMRMNPQSALSGADIINTYDEAALADILHRYGEERFARRIAARIIRRRADRPFTTTAELVALLYEAIPAAARRTGGHPAKRTFQALRIAVNDELGSLRSAVPAAMDALAVGGRIVVMAYQSLEDRIVKRVFADAVASRTPVDLPVELPGHGPRFRSLTHGAERADAAEVEHNPRSAPVRLRALQRLELEALPRQGTGKGES.

S-adenosyl-L-methionine contacts are provided by residues 101–103, aspartate 120, tyrosine 147, aspartate 171, and glutamine 178; that span reads GGH.

The protein belongs to the methyltransferase superfamily. RsmH family.

It localises to the cytoplasm. The catalysed reaction is cytidine(1402) in 16S rRNA + S-adenosyl-L-methionine = N(4)-methylcytidine(1402) in 16S rRNA + S-adenosyl-L-homocysteine + H(+). Functionally, specifically methylates the N4 position of cytidine in position 1402 (C1402) of 16S rRNA. This chain is Ribosomal RNA small subunit methyltransferase H, found in Mycobacterium ulcerans (strain Agy99).